The following is a 393-amino-acid chain: DNA primase small subunit PriS (393 aa).

Catalysis depends on residues Asp-100, Asp-102, and Asp-296.

Belongs to the eukaryotic-type primase small subunit family. As to quaternary structure, heterodimer of a small subunit (PriS) and a large subunit (PriL). It depends on Mg(2+) as a cofactor. The cofactor is Mn(2+).

Functionally, catalytic subunit of DNA primase, an RNA polymerase that catalyzes the synthesis of short RNA molecules used as primers for DNA polymerase during DNA replication. The small subunit contains the primase catalytic core and has DNA synthesis activity on its own. Binding to the large subunit stabilizes and modulates the activity, increasing the rate of DNA synthesis while decreasing the length of the DNA fragments, and conferring RNA synthesis capability. The DNA polymerase activity may enable DNA primase to also catalyze primer extension after primer synthesis. May also play a role in DNA repair. This is DNA primase small subunit PriS from Natronomonas pharaonis (strain ATCC 35678 / DSM 2160 / CIP 103997 / JCM 8858 / NBRC 14720 / NCIMB 2260 / Gabara) (Halobacterium pharaonis).